We begin with the raw amino-acid sequence, 126 residues long: Fluoride-specific ion channel FluC (126 aa).

The next 4 helical transmembrane spans lie at 6–26, 36–56, 69–89, and 99–119; these read FVAV…FAVL, YGTL…VGFF, LAIT…SEVV, and WAGL…AFGL. Positions 76 and 79 each coordinate Na(+).

Belongs to the fluoride channel Fluc/FEX (TC 1.A.43) family.

It localises to the cell inner membrane. The catalysed reaction is fluoride(in) = fluoride(out). Its activity is regulated as follows. Na(+) is not transported, but it plays an essential structural role and its presence is essential for fluoride channel function. Fluoride-specific ion channel. Important for reducing fluoride concentration in the cell, thus reducing its toxicity. This chain is Fluoride-specific ion channel FluC, found in Cupriavidus necator (strain ATCC 17699 / DSM 428 / KCTC 22496 / NCIMB 10442 / H16 / Stanier 337) (Ralstonia eutropha).